The primary structure comprises 179 residues: Translation initiation factor IF-3 (179 aa).

The protein belongs to the IF-3 family. Monomer.

It is found in the cytoplasm. IF-3 binds to the 30S ribosomal subunit and shifts the equilibrium between 70S ribosomes and their 50S and 30S subunits in favor of the free subunits, thus enhancing the availability of 30S subunits on which protein synthesis initiation begins. The polypeptide is Translation initiation factor IF-3 (Leptospira interrogans serogroup Icterohaemorrhagiae serovar copenhageni (strain Fiocruz L1-130)).